We begin with the raw amino-acid sequence, 577 residues long: Arginine--tRNA ligase (577 aa).

A 'HIGH' region motif is present at residues 122–132 (PNVAKEMHVGH).

It belongs to the class-I aminoacyl-tRNA synthetase family. In terms of assembly, monomer.

It is found in the cytoplasm. It carries out the reaction tRNA(Arg) + L-arginine + ATP = L-arginyl-tRNA(Arg) + AMP + diphosphate. This chain is Arginine--tRNA ligase, found in Enterobacter sp. (strain 638).